A 192-amino-acid chain; its full sequence is UPF0301 protein Bcep18194_A3962 (192 aa).

This sequence belongs to the UPF0301 (AlgH) family.

This is UPF0301 protein Bcep18194_A3962 from Burkholderia lata (strain ATCC 17760 / DSM 23089 / LMG 22485 / NCIMB 9086 / R18194 / 383).